Consider the following 219-residue polypeptide: Ribosomal RNA large subunit methyltransferase E (219 aa).

5 residues coordinate S-adenosyl-L-methionine: glycine 60, tryptophan 62, aspartate 85, aspartate 101, and aspartate 126. Catalysis depends on lysine 166, which acts as the Proton acceptor.

This sequence belongs to the class I-like SAM-binding methyltransferase superfamily. RNA methyltransferase RlmE family.

Its subcellular location is the cytoplasm. It carries out the reaction uridine(2552) in 23S rRNA + S-adenosyl-L-methionine = 2'-O-methyluridine(2552) in 23S rRNA + S-adenosyl-L-homocysteine + H(+). Specifically methylates the uridine in position 2552 of 23S rRNA at the 2'-O position of the ribose in the fully assembled 50S ribosomal subunit. The polypeptide is Ribosomal RNA large subunit methyltransferase E (Bordetella avium (strain 197N)).